Here is a 461-residue protein sequence, read N- to C-terminus: Fibrinogen C domain-containing protein 1 (461 aa).

The interval M1–Q24 is disordered. Over M1 to C33 the chain is Cytoplasmic. Basic and acidic residues predominate over residues L15–Q24. The helical; Signal-anchor for type II membrane protein transmembrane segment at T34–L54 threads the bilayer. Residues N55–R461 lie on the Extracellular side of the membrane. Positions G214–G238 are disordered. One can recognise a Fibrinogen C-terminal domain in the interval C235 to R458. C244 and C273 are disulfide-bonded. N-linked (GlcNAc...) asparagine glycosylation occurs at N340. Ca(2+)-binding residues include D393 and D395. C401 and C414 are oxidised to a cystine.

In terms of assembly, homotetramer; disulfide-linked. Expressed in the small and large intestinal epithelial cells with a highly polarized localization to the apical surface corresponding to the brush border and in the ducts of the salivary gland.

The protein resides in the membrane. Functionally, acetyl group-binding receptor which shows a high-affinity and calcium-dependent binding to acetylated structures such as chitin, some N-acetylated carbohydrates, and amino acids, but not to their non-acetylated counterparts. Can facilitate the endocytosis of acetylated components. This is Fibrinogen C domain-containing protein 1 (FIBCD1) from Homo sapiens (Human).